The sequence spans 203 residues: FMN-dependent NADH:quinone oxidoreductase (203 aa).

Residues Ser-9, Ser-15–Ser-17, and Ser-138–Gly-141 contribute to the FMN site.

This sequence belongs to the azoreductase type 1 family. In terms of assembly, homodimer. The cofactor is FMN.

It catalyses the reaction 2 a quinone + NADH + H(+) = 2 a 1,4-benzosemiquinone + NAD(+). The catalysed reaction is N,N-dimethyl-1,4-phenylenediamine + anthranilate + 2 NAD(+) = 2-(4-dimethylaminophenyl)diazenylbenzoate + 2 NADH + 2 H(+). Quinone reductase that provides resistance to thiol-specific stress caused by electrophilic quinones. In terms of biological role, also exhibits azoreductase activity. Catalyzes the reductive cleavage of the azo bond in aromatic azo compounds to the corresponding amines. This chain is FMN-dependent NADH:quinone oxidoreductase, found in Methylorubrum populi (strain ATCC BAA-705 / NCIMB 13946 / BJ001) (Methylobacterium populi).